The primary structure comprises 681 residues: Glutamine--fructose-6-phosphate aminotransferase [isomerizing] 1 (681 aa).

The active-site For GATase activity is the cysteine 2. Residues 2–287 form the Glutamine amidotransferase type-2 domain; that stretch reads CGIFAYLNYH…DDDVAAVVDG (286 aa). 2 positions are modified to phosphoserine: serine 103 and serine 243. The isomerase stretch occupies residues 295 to 662; the sequence is KRTARDHPGR…LQLLAFHLAV (368 aa). SIS domains lie at 359 to 498 and 530 to 671; these read HIKE…DRIS and LATE…VDFP. Substrate is bound by residues 376-377, 421-423, threonine 426, and histidine 577; these read TS and SQS.

As to quaternary structure, homotetramer, may also exist as homodimers.

It catalyses the reaction D-fructose 6-phosphate + L-glutamine = D-glucosamine 6-phosphate + L-glutamate. Its pathway is nucleotide-sugar biosynthesis; UDP-N-acetyl-alpha-D-glucosamine biosynthesis; alpha-D-glucosamine 6-phosphate from D-fructose 6-phosphate: step 1/1. Inhibited by 4,4'-dithiodipyridine. In terms of biological role, controls the flux of glucose into the hexosamine pathway. Most likely involved in regulating the availability of precursors for N- and O-linked glycosylation of proteins. Regulates the circadian expression of clock genes BMAL1 and CRY1. Has a role in fine tuning the metabolic fluctuations of cytosolic UDP-GlcNAc and its effects on hyaluronan synthesis that occur during tissue remodeling. This chain is Glutamine--fructose-6-phosphate aminotransferase [isomerizing] 1 (Gfpt1), found in Rattus norvegicus (Rat).